The primary structure comprises 269 residues: Putative pyruvate, phosphate dikinase regulatory protein (269 aa).

Gly-151–Thr-158 lines the ADP pocket.

Belongs to the pyruvate, phosphate/water dikinase regulatory protein family. PDRP subfamily.

It catalyses the reaction N(tele)-phospho-L-histidyl/L-threonyl-[pyruvate, phosphate dikinase] + ADP = N(tele)-phospho-L-histidyl/O-phospho-L-threonyl-[pyruvate, phosphate dikinase] + AMP + H(+). It carries out the reaction N(tele)-phospho-L-histidyl/O-phospho-L-threonyl-[pyruvate, phosphate dikinase] + phosphate + H(+) = N(tele)-phospho-L-histidyl/L-threonyl-[pyruvate, phosphate dikinase] + diphosphate. In terms of biological role, bifunctional serine/threonine kinase and phosphorylase involved in the regulation of the pyruvate, phosphate dikinase (PPDK) by catalyzing its phosphorylation/dephosphorylation. This is Putative pyruvate, phosphate dikinase regulatory protein from Geobacter metallireducens (strain ATCC 53774 / DSM 7210 / GS-15).